The following is a 127-amino-acid chain: Putative pre-16S rRNA nuclease (127 aa).

The protein belongs to the YqgF nuclease family.

Its subcellular location is the cytoplasm. Functionally, could be a nuclease involved in processing of the 5'-end of pre-16S rRNA. This is Putative pre-16S rRNA nuclease from Campylobacter jejuni subsp. jejuni serotype O:23/36 (strain 81-176).